We begin with the raw amino-acid sequence, 93 residues long: Co-chaperonin GroES (93 aa).

It belongs to the GroES chaperonin family. In terms of assembly, heptamer of 7 subunits arranged in a ring. Interacts with the chaperonin GroEL.

It is found in the cytoplasm. Together with the chaperonin GroEL, plays an essential role in assisting protein folding. The GroEL-GroES system forms a nano-cage that allows encapsulation of the non-native substrate proteins and provides a physical environment optimized to promote and accelerate protein folding. GroES binds to the apical surface of the GroEL ring, thereby capping the opening of the GroEL channel. In Streptococcus gordonii (strain Challis / ATCC 35105 / BCRC 15272 / CH1 / DL1 / V288), this protein is Co-chaperonin GroES.